The chain runs to 466 residues: Coagulation factor VII (466 aa).

Positions 1–20 are cleaved as a signal peptide; sequence MVSQALRLLCLLLGLQGCLA. Positions 21 to 60 are excised as a propeptide; the sequence is AGGVAEASGGETRDXXWKPGPHRVFITQEEAHGVLHRRRR. One can recognise a Gla domain in the interval 61–105; the sequence is ANAFLEELRPGSLERECKEEQCSFEEAREIFKDLERTKLFWISYS. A 4-carboxyglutamate mark is found at Glu66, Glu67, Glu74, Glu76, Glu79, Glu80, Glu85, Glu86, Glu89, and Glu95. A disulfide bridge connects residues Cys77 and Cys82. The EGF-like 1; calcium-binding domain occupies 106–142; it reads DGDQCASSPCQNGGSCKDQLQSYICFCLPAFEGRNCE. Disulfide bonds link Cys110–Cys121, Cys115–Cys130, Cys132–Cys141, Cys151–Cys162, Cys158–Cys172, Cys174–Cys187, Cys195–Cys322, Cys219–Cys224, Cys238–Cys254, and Cys370–Cys389. O-linked (Glc...) serine; alternate glycosylation is present at Ser112. The O-linked (Xyl...) serine; alternate glycan is linked to Ser112. A glycan (O-linked (Fuc) serine) is linked at Ser120. (3R)-3-hydroxyaspartate is present on Asp123. One can recognise an EGF-like 2 domain in the interval 147–188; the sequence is DQLICVNENGGCEQYCSDHTGTKRSCRCHEGYSLLADGVSCT. The N-linked (GlcNAc...) asparagine glycan is linked to Asn205. One can recognise a Peptidase S1 domain in the interval 213-452; that stretch reads IVGGKVCPKG…YIEWLQKLMR (240 aa). Catalysis depends on charge relay system residues His253 and Asp302. A glycan (N-linked (GlcNAc...) asparagine) is linked at Asn382. Asp398 provides a ligand contact to substrate. Cys400 and Cys428 are oxidised to a cystine. Ser404 acts as the Charge relay system in catalysis.

Belongs to the peptidase S1 family. Heterodimer of a light chain and a heavy chain linked by a disulfide bond. Post-translationally, the vitamin K-dependent, enzymatic carboxylation of some glutamate residues allows the modified protein to bind calcium. In terms of processing, the iron and 2-oxoglutarate dependent 3-hydroxylation of aspartate and asparagine is (R) stereospecific within EGF domains. O-glycosylated. O-fucosylated by POFUT1 on a conserved serine or threonine residue found in the consensus sequence C2-X(4,5)-[S/T]-C3 of EGF domains, where C2 and C3 are the second and third conserved cysteines. Post-translationally, can be either O-glucosylated or O-xylosylated at Ser-112 by POGLUT1.

Its subcellular location is the secreted. It carries out the reaction Selective cleavage of Arg-|-Ile bond in factor X to form factor Xa.. Its function is as follows. Initiates the extrinsic pathway of blood coagulation. Serine protease that circulates in the blood in a zymogen form. Factor VII is converted to factor VIIa by factor Xa, factor XIIa, factor IXa, or thrombin by minor proteolysis. In the presence of tissue factor and calcium ions, factor VIIa then converts factor X to factor Xa by limited proteolysis. Factor VIIa also converts factor IX to factor IXa in the presence of tissue factor and calcium. The sequence is that of Coagulation factor VII (F7) from Pan troglodytes (Chimpanzee).